The sequence spans 206 residues: Large ribosomal subunit protein uL3 (206 aa).

This sequence belongs to the universal ribosomal protein uL3 family. Part of the 50S ribosomal subunit. Forms a cluster with proteins L14 and L19.

Its function is as follows. One of the primary rRNA binding proteins, it binds directly near the 3'-end of the 23S rRNA, where it nucleates assembly of the 50S subunit. The protein is Large ribosomal subunit protein uL3 of Thermus thermophilus (strain ATCC BAA-163 / DSM 7039 / HB27).